A 249-amino-acid polypeptide reads, in one-letter code: Transcription factor MYB90 (249 aa).

2 consecutive HTH myb-type domains span residues 5 to 57 (SKGL…LNYL) and 58 to 112 (KPSI…SKKH). DNA-binding regions (H-T-H motif) lie at residues 33 to 57 (WHQVPLRAGLNRCRKSCRLRWLNYL) and 85 to 108 (WSLIAGRLPGRTANDVKNYWNTHL).

As to quaternary structure, interacts with BHLH12/MYC1, BHLH1/GL3/MYC6, BHLH2/EGL3/MYC146, and BHLH42/TT8. As to expression, expressed only in leaves and siliques.

It localises to the nucleus. Functionally, transcription activator, when associated with BHLH12/MYC1, EGL3, or GL3. Promotes the synthesis of phenylpropanoid-derived compounds such as anthocyanins. The protein is Transcription factor MYB90 (MYB90) of Arabidopsis thaliana (Mouse-ear cress).